The sequence spans 1040 residues: Vitamin B12-dependent ribonucleotide reductase (1040 aa).

Substrate-binding positions include Ser169, Ala213–Cys214, Gly242, Asn420–Glu424, and Pro604–Ile608. The cysteines at positions 214 and 433 are disulfide-linked. Asn420 (proton acceptor) is an active-site residue. The active-site Cysteine radical intermediate is the Cys422. The active-site Proton acceptor is Glu424. 2 disordered regions span residues Ser909 to Ala932 and Gly969 to Ala988. The segment covering Gly969–Gln979 has biased composition (polar residues).

This sequence belongs to the ribonucleoside diphosphate reductase class-2 family. Adenosylcob(III)alamin is required as a cofactor.

It carries out the reaction a 2'-deoxyribonucleoside 5'-diphosphate + [thioredoxin]-disulfide + H2O = a ribonucleoside 5'-diphosphate + [thioredoxin]-dithiol. In terms of biological role, catalyzes the reduction of ribonucleotides to deoxyribonucleotides. May function to provide a pool of deoxyribonucleotide precursors for DNA repair during oxygen limitation and/or for immediate growth after restoration of oxygen. In Rhodopirellula baltica (strain DSM 10527 / NCIMB 13988 / SH1), this protein is Vitamin B12-dependent ribonucleotide reductase (nrdJ).